We begin with the raw amino-acid sequence, 236 residues long: Phospholipid hydroperoxide glutathione peroxidase, chloroplastic (236 aa).

A chloroplast-targeting transit peptide spans 1–64 (MASMAFSTTF…SNFPIVPSKT (64 aa)). Cys-111 is a catalytic residue.

It belongs to the glutathione peroxidase family.

It localises to the plastid. The protein resides in the chloroplast stroma. The enzyme catalyses a hydroperoxy polyunsaturated fatty acid + 2 glutathione = a hydroxy polyunsaturated fatty acid + glutathione disulfide + H2O. Protects cells and enzymes from oxidative damage, by catalyzing the reduction of hydrogen peroxide, lipid peroxides and organic hydroperoxide, by glutathione. The protein is Phospholipid hydroperoxide glutathione peroxidase, chloroplastic of Pisum sativum (Garden pea).